The sequence spans 120 residues: NAD(P)H-quinone oxidoreductase subunit 3, chloroplastic (120 aa).

3 helical membrane-spanning segments follow: residues 9–29 (IFWTFLIIASLIPILAFWISG), 64–84 (MFALVFVVFDVETVFLYPWAM), and 88–108 (VLGVSVFIEAFIFVLILVVGL).

It belongs to the complex I subunit 3 family. NDH is composed of at least 16 different subunits, 5 of which are encoded in the nucleus.

It is found in the plastid. Its subcellular location is the chloroplast thylakoid membrane. The catalysed reaction is a plastoquinone + NADH + (n+1) H(+)(in) = a plastoquinol + NAD(+) + n H(+)(out). The enzyme catalyses a plastoquinone + NADPH + (n+1) H(+)(in) = a plastoquinol + NADP(+) + n H(+)(out). NDH shuttles electrons from NAD(P)H:plastoquinone, via FMN and iron-sulfur (Fe-S) centers, to quinones in the photosynthetic chain and possibly in a chloroplast respiratory chain. The immediate electron acceptor for the enzyme in this species is believed to be plastoquinone. Couples the redox reaction to proton translocation, and thus conserves the redox energy in a proton gradient. The sequence is that of NAD(P)H-quinone oxidoreductase subunit 3, chloroplastic from Agrostis stolonifera (Creeping bentgrass).